The sequence spans 745 residues: MTNITHLLGEIKDIDETLKVHKLSKQDYEEILKILKRPPNLIELGIFAAMWSEHCSYKSSKKYLNGFPTKAPWVVQGPGENAGIIDIGENLCAVFKIESHNHPSFIEPHAGAATGVGGIMRDIFTMGARPVASLNSIRFGDISDNGTLGKKHRYLLRGVVEGIGSYGNCMGVPTIGGEMSFESCYNGNILVNAFCLGLVKKDEIFYGKAEGIGNPVIYVGSKTGRDGLGGAVMSSDSFSSTSKAVRSAVQVGDPFAEKLLLEACLELFKQDLIVGIQDMGAAGLTSSSFEMAGRSGSGMTLYLDKVPMREEGMNPYELMLSESQERMLICAKKGCEQQVLDIFAKWEVDAAIIGEVTKSGIMELFWYGEKCAEIPIAQLSENAPMLDMPLRPVAVQTHKANQLKTSQSAQEIFITLLGSVEVANKRWVYSQYDSSVQSNTITPAGSGDASMIRIKGTNSALSMSVDCNMRYCYLDPKNGAKIAVATSGRNSIVNGAKPLAISDCLNFGSPHNPEVMWAFKEVCQGIKESCKVLNTPVVSGNVSLHNQSDGVDIYPTPSIVSVGLIDDVSKVVSSTFQTQGNMLVLLGEIKAEFGGSLAQKILEGHIYGQIPSIDLTQEFALWNLMLEASDECMLSAAKDIGEGGLAITLAKMALGNGECQPIGCNVHTHLPSQLLFAPSQSCIIVEVAGEHLNTLKQKAKQHKIAFTEIGCVGGDIFCVDEINISLEEMKKLYFESFEKLIAQDL.

The active site involves His-54. 2 residues coordinate ATP: Tyr-57 and Lys-96. Glu-98 is a Mg(2+) binding site. Substrate contacts are provided by residues 99 to 102 (SHNH) and Arg-121. His-100 functions as the Proton acceptor in the catalytic mechanism. Asp-122 lines the Mg(2+) pocket. A substrate-binding site is contributed by Gln-250. Asp-278 is a binding site for Mg(2+). A substrate-binding site is contributed by 322–324 (ESQ). Positions 503 and 540 each coordinate ATP. Residue Asn-541 participates in Mg(2+) binding. Ser-543 provides a ligand contact to substrate.

This sequence belongs to the FGAMS family. In terms of assembly, monomer. Part of the FGAM synthase complex composed of 1 PurL, 1 PurQ and 2 PurS subunits.

Its subcellular location is the cytoplasm. The catalysed reaction is N(2)-formyl-N(1)-(5-phospho-beta-D-ribosyl)glycinamide + L-glutamine + ATP + H2O = 2-formamido-N(1)-(5-O-phospho-beta-D-ribosyl)acetamidine + L-glutamate + ADP + phosphate + H(+). Its pathway is purine metabolism; IMP biosynthesis via de novo pathway; 5-amino-1-(5-phospho-D-ribosyl)imidazole from N(2)-formyl-N(1)-(5-phospho-D-ribosyl)glycinamide: step 1/2. In terms of biological role, part of the phosphoribosylformylglycinamidine synthase complex involved in the purines biosynthetic pathway. Catalyzes the ATP-dependent conversion of formylglycinamide ribonucleotide (FGAR) and glutamine to yield formylglycinamidine ribonucleotide (FGAM) and glutamate. The FGAM synthase complex is composed of three subunits. PurQ produces an ammonia molecule by converting glutamine to glutamate. PurL transfers the ammonia molecule to FGAR to form FGAM in an ATP-dependent manner. PurS interacts with PurQ and PurL and is thought to assist in the transfer of the ammonia molecule from PurQ to PurL. In Helicobacter hepaticus (strain ATCC 51449 / 3B1), this protein is Phosphoribosylformylglycinamidine synthase subunit PurL.